The following is a 184-amino-acid chain: MSQTETIARPYAKAVFEQAVETESVANWIDFLEIASTFVSNEAVKEHLASASFMENFLVWFEQFLVESRGEALSEQERNFLNVLNQQGRMAIVPEIATQFKQLYYSAQNVCKATVYTALALDEKQKKELQATIERNVHREVVLDVREEPALIAGVRIEYDGMVIDQSARGRLERFARMLDESRN.

Belongs to the ATPase delta chain family. As to quaternary structure, F-type ATPases have 2 components, F(1) - the catalytic core - and F(0) - the membrane proton channel. F(1) has five subunits: alpha(3), beta(3), gamma(1), delta(1), epsilon(1). F(0) has three main subunits: a(1), b(2) and c(10-14). The alpha and beta chains form an alternating ring which encloses part of the gamma chain. F(1) is attached to F(0) by a central stalk formed by the gamma and epsilon chains, while a peripheral stalk is formed by the delta and b chains.

Its subcellular location is the cell inner membrane. Its function is as follows. F(1)F(0) ATP synthase produces ATP from ADP in the presence of a proton or sodium gradient. F-type ATPases consist of two structural domains, F(1) containing the extramembraneous catalytic core and F(0) containing the membrane proton channel, linked together by a central stalk and a peripheral stalk. During catalysis, ATP synthesis in the catalytic domain of F(1) is coupled via a rotary mechanism of the central stalk subunits to proton translocation. In terms of biological role, this protein is part of the stalk that links CF(0) to CF(1). It either transmits conformational changes from CF(0) to CF(1) or is implicated in proton conduction. This chain is ATP synthase subunit delta, found in Dichelobacter nodosus (strain VCS1703A).